Reading from the N-terminus, the 219-residue chain is Pyridoxal 5'-phosphate synthase subunit PDX2 (219 aa).

52–54 (GES) is an L-glutamine binding site. C87 (nucleophile) is an active-site residue. L-glutamine-binding positions include R121 and 153–154 (IR). Active-site charge relay system residues include H196 and E198.

The protein belongs to the glutaminase PdxT/SNO family. In terms of assembly, in the presence of Pdx1, forms a dodecamer of heterodimers. Only shows activity in the heterodimer.

The protein localises to the cytoplasm. It catalyses the reaction aldehydo-D-ribose 5-phosphate + D-glyceraldehyde 3-phosphate + L-glutamine = pyridoxal 5'-phosphate + L-glutamate + phosphate + 3 H2O + H(+). The enzyme catalyses L-glutamine + H2O = L-glutamate + NH4(+). The protein operates within cofactor biosynthesis; pyridoxal 5'-phosphate biosynthesis. Functionally, catalyzes the hydrolysis of glutamine to glutamate and ammonia as part of the biosynthesis of pyridoxal 5'-phosphate. The resulting ammonia molecule is channeled to the active site of Pdx1. The chain is Pyridoxal 5'-phosphate synthase subunit PDX2 from Plasmodium falciparum (isolate 3D7).